Consider the following 237-residue polypeptide: 4-hydroxy-tetrahydrodipicolinate reductase (237 aa).

NAD(+)-binding positions include 11–16 (GASGRM), 92–94 (GTT), and 116–119 (GSNF). His-148 (proton donor/acceptor) is an active-site residue. A (S)-2,3,4,5-tetrahydrodipicolinate-binding site is contributed by His-149. Catalysis depends on Lys-152, which acts as the Proton donor. 158–159 (GS) is a (S)-2,3,4,5-tetrahydrodipicolinate binding site.

It belongs to the DapB family.

Its subcellular location is the cytoplasm. The enzyme catalyses (S)-2,3,4,5-tetrahydrodipicolinate + NAD(+) + H2O = (2S,4S)-4-hydroxy-2,3,4,5-tetrahydrodipicolinate + NADH + H(+). It carries out the reaction (S)-2,3,4,5-tetrahydrodipicolinate + NADP(+) + H2O = (2S,4S)-4-hydroxy-2,3,4,5-tetrahydrodipicolinate + NADPH + H(+). Its pathway is amino-acid biosynthesis; L-lysine biosynthesis via DAP pathway; (S)-tetrahydrodipicolinate from L-aspartate: step 4/4. Its function is as follows. Catalyzes the conversion of 4-hydroxy-tetrahydrodipicolinate (HTPA) to tetrahydrodipicolinate. The protein is 4-hydroxy-tetrahydrodipicolinate reductase of Xylella fastidiosa (strain M12).